Consider the following 354-residue polypeptide: MFKVLVINPGSTSTKVALYEDEKEIVRSDITHDVETLKNYKSVIEQLDLRLEAINKWLSENGIKVLELSAIVVRGGLIKPVQSGTYVVNDIMLEDLRKGVGGEHPSNLGGIIGRALADPYGIPVYTLDPVAVDEMEDVARISGLPELPRKSQSHALNIKACIHRYARENNLKEEELNMIVAHMGGGISVAAIKGGRIVDVNNANQMGPFSPERTGSLPSMKVVEMCYSGKYTLEEMKKKIVGMGGLVAHLGTNDAREVVKRIEAGDKKAKLVFEAMAYQIAKEIGRMAAVLKGDVKTIILTGGLAYSKPLIEIIIDMVGFIAPITLYPGGDEMEALRDGALRVLRGQETPKIYG.

It belongs to the acetokinase family.

It is found in the cytoplasm. It carries out the reaction butanoate + ATP = butanoyl phosphate + ADP. The protein is Probable butyrate kinase 2 of Caldanaerobacter subterraneus subsp. tengcongensis (strain DSM 15242 / JCM 11007 / NBRC 100824 / MB4) (Thermoanaerobacter tengcongensis).